The primary structure comprises 338 residues: MSASGLPFDDFRELLRNLPGPDAAALVAARERDAQLTKPPGALGRLEEIAFWLAAWTGKAPVVNRPLVAIFAGNHGVTRQGVTPFPSSVTAQMVENFAAGGAAINQICVSHDLGLKVFDLALEYPTGDITEEAALSERDCAATMAFGMEAIAGGTDLLCIGEMGIGNTTIAAAINLGLYGGTAEEWVGPGTGSEGEVLKRKIAAVEKAVALHRDHLSDPLELMRRLGGREIAAMAGAILAARVQKVPVIIDGYVATAAASILKAANPSALDHCLIGHVSGEPGHLRAIEKLGKTPLLALGMRLGEGTGAALAAGIVKAAAACHSGMATFAQAGVSNKE.

Glutamate 305 (proton acceptor) is an active-site residue.

This sequence belongs to the CobT family. Homodimer.

It carries out the reaction 5,6-dimethylbenzimidazole + nicotinate beta-D-ribonucleotide = alpha-ribazole 5'-phosphate + nicotinate + H(+). It functions in the pathway nucleoside biosynthesis; alpha-ribazole biosynthesis; alpha-ribazole from 5,6-dimethylbenzimidazole: step 1/2. In terms of biological role, catalyzes the synthesis of alpha-ribazole-5'-phosphate from nicotinate mononucleotide (NAMN) and 5,6-dimethylbenzimidazole (DMB). In Sinorhizobium sp, this protein is Nicotinate-nucleotide--dimethylbenzimidazole phosphoribosyltransferase (cobU).